The sequence spans 353 residues: O-antigen biosynthesis glycosyltransferase WclY (353 aa).

A helical transmembrane segment spans residues 116-136; the sequence is SLIGGLLWCSIWLFFDKLVIL. Positions 190 and 271 each coordinate UDP. The short motif at 263 to 271 is the E(x7)E element; the sequence is EGFGLTVLE.

The protein belongs to the glycosyltransferase group 1 family. Glycosyltransferase 4 subfamily.

The protein resides in the membrane. Its pathway is bacterial outer membrane biogenesis; LPS O-antigen biosynthesis. With respect to regulation, activated by 5mM MnCl(2) and MgCl(2). No significant effect on activity by 5 mM ethylenediaminetetraacetic acid (EDTA), 0.125-0.5% Triton X-100 or dithiothreitol (DTT). Inhibited by 5 mM Zn-acetate. Involved in the assembly of the O-repeating unit during O-antigen biosynthesis. Glucosyltransferase accountable for the alpha-D-Glc-1,4-beta-D-Gal linkage within the O-antigen. Transfers alpha-1,4-Glc to the Gal moiety of a specific Gal-beta1-3GalNAc-alpha-OPO3-PO3-phenoxyundecyl (Gal-beta1-3GalNAc-PP-PhU) synthetic natural acceptor substrate analog. Requires both Gal-beta1-3GalNAc-alpha and the diphosphate moiety in the acceptor. Not active with GalNAc-PP-PhU, GlcNAc-PP-PhU, Gal-beta1-3GalNAc-alpha-O-benzyl, D-Rha-alpha1-3GlcNAc-alpha-PP-PhU or D-Man-alpha1-3Man-alpha-5-benzamidopentyl (BAP), nor with glycopeptides TTTVTP (Gal-beta1-3GalNAc-alpha-)TPTG or TT (Gal-beta1-3GalNAc-alpha-)TVTPTPTG as acceptor substrates. Has a broad nucleotide sugar donor substrate specificity with ADP-Glc, TDP-Glc and UDP-Glc as superior donors. Gal, GlcNAc, and GalNAc residues are transferred from UDP-sugars, but with low activity. UDP-Xyl, UDP-GlcA, GDP-Fuc or GDP-K-Rha do not act as donors. The chain is O-antigen biosynthesis glycosyltransferase WclY from Escherichia coli.